The sequence spans 160 residues: MTKKKAYKPGSATIAQNKRARHEYFIEEEFEAGLALQGWEVKSLRAGKANISDSYVMFKNGEAFLFGATITPLNVASTHVVCEPMRTRKLLLNKRELDSLFGRVNREGYTVVALSMYWKNAWVKVKIGVAKGKKDNDKRDDIRDREWKLDKARIMKHANR.

It belongs to the SmpB family.

The protein resides in the cytoplasm. In terms of biological role, required for rescue of stalled ribosomes mediated by trans-translation. Binds to transfer-messenger RNA (tmRNA), required for stable association of tmRNA with ribosomes. tmRNA and SmpB together mimic tRNA shape, replacing the anticodon stem-loop with SmpB. tmRNA is encoded by the ssrA gene; the 2 termini fold to resemble tRNA(Ala) and it encodes a 'tag peptide', a short internal open reading frame. During trans-translation Ala-aminoacylated tmRNA acts like a tRNA, entering the A-site of stalled ribosomes, displacing the stalled mRNA. The ribosome then switches to translate the ORF on the tmRNA; the nascent peptide is terminated with the 'tag peptide' encoded by the tmRNA and targeted for degradation. The ribosome is freed to recommence translation, which seems to be the essential function of trans-translation. This is SsrA-binding protein from Yersinia pseudotuberculosis serotype O:1b (strain IP 31758).